The following is a 300-amino-acid chain: ATP-dependent (S)-NAD(P)H-hydrate dehydratase (300 aa).

Residues 6 to 297 (YAGKIKEFIP…GCIHQSFTSL (292 aa)) form the YjeF C-terminal domain. Residues G106 and 158–164 (NEVEFKR) contribute to the (6S)-NADPHX site. ATP contacts are provided by residues 188 to 192 (KGSTD) and 218 to 227 (GSNRRCGGQG). D228 provides a ligand contact to (6S)-NADPHX.

This sequence belongs to the NnrD/CARKD family. Requires Mg(2+) as cofactor.

It catalyses the reaction (6S)-NADHX + ATP = ADP + phosphate + NADH + H(+). The catalysed reaction is (6S)-NADPHX + ATP = ADP + phosphate + NADPH + H(+). Catalyzes the dehydration of the S-form of NAD(P)HX at the expense of ATP, which is converted to ADP. Together with NAD(P)HX epimerase, which catalyzes the epimerization of the S- and R-forms, the enzyme allows the repair of both epimers of NAD(P)HX, a damaged form of NAD(P)H that is a result of enzymatic or heat-dependent hydration. This chain is ATP-dependent (S)-NAD(P)H-hydrate dehydratase, found in Pediculus humanus subsp. corporis (Body louse).